Consider the following 236-residue polypeptide: 1-(5-phosphoribosyl)-5-[(5-phosphoribosylamino)methylideneamino] imidazole-4-carboxamide isomerase (236 aa).

D8 serves as the catalytic Proton acceptor. The Proton donor role is filled by D128.

Belongs to the HisA/HisF family.

The protein localises to the cytoplasm. It carries out the reaction 1-(5-phospho-beta-D-ribosyl)-5-[(5-phospho-beta-D-ribosylamino)methylideneamino]imidazole-4-carboxamide = 5-[(5-phospho-1-deoxy-D-ribulos-1-ylimino)methylamino]-1-(5-phospho-beta-D-ribosyl)imidazole-4-carboxamide. The protein operates within amino-acid biosynthesis; L-histidine biosynthesis; L-histidine from 5-phospho-alpha-D-ribose 1-diphosphate: step 4/9. The protein is 1-(5-phosphoribosyl)-5-[(5-phosphoribosylamino)methylideneamino] imidazole-4-carboxamide isomerase of Nitrosopumilus maritimus (strain SCM1).